An 869-amino-acid chain; its full sequence is Sodium-dependent phosphate transporter (869 aa).

Over 1-18 (MEAVAELSAPSLAGAPGE) the chain is Extracellular. A helical transmembrane segment spans residues 19-39 (YTWIVAVAGVTCFLTAFAIGA). Topologically, residues 40 to 54 (NDVANTFSSSVGSRA) are cytoplasmic. A helical transmembrane segment spans residues 55–75 (IPLWAAIGMSAVLETVGATLL). The Extracellular portion of the chain corresponds to 76 to 97 (GGAVTDSIRSKIIDFEVFRETP). Residues 98 to 118 (SILMTGMLCALVGAGLWLFLA) traverse the membrane as a helical segment. The Cytoplasmic segment spans residues 119–120 (NH). A helical membrane pass occupies residues 121 to 141 (LGLPVSTTHSIIGALLGFGLA). At 142 to 154 (SGNVRAVKWTQVA) the chain is on the extracellular side. The helical transmembrane segment at 155–175 (FIVGSWVAAPLAASAAGATIF) threads the bilayer. The Cytoplasmic portion of the chain corresponds to 176 to 196 (VCMRRLILRSRQPLRRAKRFL). The chain crosses the membrane as a helical span at residues 197–217 (WIFIYLITLTFSVFLVFKNFF). The Extracellular segment spans residues 218 to 250 (ELNVSCDQMVAGGRVEHFEPCRISRWADAHSGT). A helical transmembrane segment spans residues 251 to 271 (ALGIAVALSVALTFVISCLVY). Over 272–720 (RFAFYRVESY…SGSADSEIGS (449 aa)) the chain is Cytoplasmic. Disordered regions lie at residues 286 to 312 (KRSSRTEPRDASEEGTGPSHARPGGLL), 374 to 401 (AAAAKPDVGTAAQSPESRFAADPVGSSV), and 453 to 571 (SAFL…KRER). Over residues 457–481 (SSPSSSVPPSSPSPSSTPSSPSASP) the composition is skewed to low complexity. Residues 482–491 (RRPPSRPPVP) show a composition bias toward pro residues. Positions 492 to 509 (RTCSPAPVSPSVPRAFAS) are enriched in low complexity. Basic and acidic residues predominate over residues 556–571 (PHPERRDEVPAAKRER). Residues 721 to 741 (PWYILLFGGLSMSLGLALLGY) traverse the membrane as a helical segment. The Extracellular portion of the chain corresponds to 742–759 (RVIKTVGVKLVKITPARG). A helical transmembrane segment spans residues 760-780 (FSMELGAAWTVLIFSAIGIPL). Over 781–837 (STTHCAVGSTVGVGLMEPKHPRRETGDGPVAEGEEPKKRAVQCPVINTASVNWKLFG) the chain is Cytoplasmic. Residues 838–858 (GVFVSWIITIAFSALVTAALF) traverse the membrane as a helical segment. Over 859–869 (SFAAYSPRMVS) the chain is Extracellular.

Belongs to the inorganic phosphate transporter (PiT) (TC 2.A.20) family.

It is found in the cell membrane. Its subcellular location is the vacuole membrane. The protein resides in the cytoplasmic vesicle membrane. It carries out the reaction 2 Na(+)(out) + phosphate(out) = 2 Na(+)(in) + phosphate(in). Sodium-phosphate symporter which preferentially transports the monovalent form of phosphate with a stoichiometry of two sodium ions per phosphate ion. Plays a role in stabilizing the cytosolic pH and osmoregulation. May be required for optimal virulence of parasites in vivo. This Toxoplasma gondii (strain ATCC 50861 / VEG) protein is Sodium-dependent phosphate transporter.